A 126-amino-acid chain; its full sequence is Glycine cleavage system H protein (126 aa).

Positions 22–104 constitute a Lipoyl-binding domain; the sequence is KLRIGITDFA…YEKAWMIVIE (83 aa). Position 63 is an N6-lipoyllysine (Lys-63).

It belongs to the GcvH family. As to quaternary structure, the glycine cleavage system is composed of four proteins: P, T, L and H. It depends on (R)-lipoate as a cofactor.

In terms of biological role, the glycine cleavage system catalyzes the degradation of glycine. The H protein shuttles the methylamine group of glycine from the P protein to the T protein. Is also involved in protein lipoylation via its role as an octanoyl/lipoyl carrier protein intermediate. In Oceanobacillus iheyensis (strain DSM 14371 / CIP 107618 / JCM 11309 / KCTC 3954 / HTE831), this protein is Glycine cleavage system H protein.